The following is a 217-amino-acid chain: ATP-dependent Clp protease proteolytic subunit (217 aa).

The active-site Nucleophile is Ser-119. The active site involves His-144.

It belongs to the peptidase S14 family. In terms of assembly, fourteen ClpP subunits assemble into 2 heptameric rings which stack back to back to give a disk-like structure with a central cavity, resembling the structure of eukaryotic proteasomes.

Its subcellular location is the cytoplasm. The catalysed reaction is Hydrolysis of proteins to small peptides in the presence of ATP and magnesium. alpha-casein is the usual test substrate. In the absence of ATP, only oligopeptides shorter than five residues are hydrolyzed (such as succinyl-Leu-Tyr-|-NHMec, and Leu-Tyr-Leu-|-Tyr-Trp, in which cleavage of the -Tyr-|-Leu- and -Tyr-|-Trp bonds also occurs).. Its function is as follows. Cleaves peptides in various proteins in a process that requires ATP hydrolysis. Has a chymotrypsin-like activity. Plays a major role in the degradation of misfolded proteins. The sequence is that of ATP-dependent Clp protease proteolytic subunit from Bordetella bronchiseptica (strain ATCC BAA-588 / NCTC 13252 / RB50) (Alcaligenes bronchisepticus).